The primary structure comprises 379 residues: Cytochrome b (379 aa).

Transmembrane regions (helical) follow at residues 33-53, 77-98, 113-133, and 178-198; these read FGSLLGVCLMIQILTGLFLAM, WLIRYLHANGASMFFICLFIHV, WNIGIILFLTTMATAFVGYVL, and FFAFHFILPFIITAFALVHLL. Histidine 83 and histidine 97 together coordinate heme b. Positions 182 and 196 each coordinate heme b. A ubiquinone is bound at residue histidine 201. Helical transmembrane passes span 226-246, 288-308, 320-340, and 347-367; these read IKDLLGILLLLLALMILALFF, LGGVLALILSILILAAFPLLN, ITQTIYWTLIVNLLVLTWIGG, and FTTIGQIASITYFTTIIILMP.

Belongs to the cytochrome b family. As to quaternary structure, the cytochrome bc1 complex contains 11 subunits: 3 respiratory subunits (MT-CYB, CYC1 and UQCRFS1), 2 core proteins (UQCRC1 and UQCRC2) and 6 low-molecular weight proteins (UQCRH/QCR6, UQCRB/QCR7, UQCRQ/QCR8, UQCR10/QCR9, UQCR11/QCR10 and a cleavage product of UQCRFS1). This cytochrome bc1 complex then forms a dimer. The cofactor is heme b.

It is found in the mitochondrion inner membrane. Component of the ubiquinol-cytochrome c reductase complex (complex III or cytochrome b-c1 complex) that is part of the mitochondrial respiratory chain. The b-c1 complex mediates electron transfer from ubiquinol to cytochrome c. Contributes to the generation of a proton gradient across the mitochondrial membrane that is then used for ATP synthesis. The protein is Cytochrome b (MT-CYB) of Akodon aerosus (Highland grass mouse).